Reading from the N-terminus, the 111-residue chain is Large ribosomal subunit protein uL24 (111 aa).

The protein belongs to the universal ribosomal protein uL24 family. Part of the 50S ribosomal subunit.

One of two assembly initiator proteins, it binds directly to the 5'-end of the 23S rRNA, where it nucleates assembly of the 50S subunit. Its function is as follows. One of the proteins that surrounds the polypeptide exit tunnel on the outside of the subunit. In Chlamydia trachomatis serovar A (strain ATCC VR-571B / DSM 19440 / HAR-13), this protein is Large ribosomal subunit protein uL24.